The following is a 945-amino-acid chain: Alanine--tRNA ligase (945 aa).

Residues His-564, His-568, Cys-666, and His-670 each coordinate Zn(2+). The interval 911–945 (SGGGRPDMAQAGGKDASKLPEALQQARETMTEKLG) is disordered.

Belongs to the class-II aminoacyl-tRNA synthetase family. It depends on Zn(2+) as a cofactor.

The protein localises to the cytoplasm. The enzyme catalyses tRNA(Ala) + L-alanine + ATP = L-alanyl-tRNA(Ala) + AMP + diphosphate. Functionally, catalyzes the attachment of alanine to tRNA(Ala) in a two-step reaction: alanine is first activated by ATP to form Ala-AMP and then transferred to the acceptor end of tRNA(Ala). Also edits incorrectly charged Ser-tRNA(Ala) and Gly-tRNA(Ala) via its editing domain. This is Alanine--tRNA ligase from Rhodopirellula baltica (strain DSM 10527 / NCIMB 13988 / SH1).